The primary structure comprises 55 residues: Large ribosomal subunit protein bL33 (55 aa).

Belongs to the bacterial ribosomal protein bL33 family.

The sequence is that of Large ribosomal subunit protein bL33 from Cereibacter sphaeroides (strain ATCC 17029 / ATH 2.4.9) (Rhodobacter sphaeroides).